A 378-amino-acid polypeptide reads, in one-letter code: 23S rRNA (uracil(747)-C(5))-methyltransferase RlmC (378 aa).

[4Fe-4S] cluster-binding residues include Cys-3, Cys-11, Cys-14, and Cys-87. Residues Gln-212, Phe-241, Glu-262, and Asn-309 each contribute to the S-adenosyl-L-methionine site. Catalysis depends on Cys-336, which acts as the Nucleophile.

It belongs to the class I-like SAM-binding methyltransferase superfamily. RNA M5U methyltransferase family. RlmC subfamily.

It carries out the reaction uridine(747) in 23S rRNA + S-adenosyl-L-methionine = 5-methyluridine(747) in 23S rRNA + S-adenosyl-L-homocysteine + H(+). Functionally, catalyzes the formation of 5-methyl-uridine at position 747 (m5U747) in 23S rRNA. The polypeptide is 23S rRNA (uracil(747)-C(5))-methyltransferase RlmC (Shewanella pealeana (strain ATCC 700345 / ANG-SQ1)).